The primary structure comprises 203 residues: Outer-membrane lipoprotein carrier protein (203 aa).

The N-terminal stretch at 1–21 (MKKIAITCALLSSLVASSVWA) is a signal peptide.

It belongs to the LolA family. As to quaternary structure, monomer.

Its subcellular location is the periplasm. In terms of biological role, participates in the translocation of lipoproteins from the inner membrane to the outer membrane. Only forms a complex with a lipoprotein if the residue after the N-terminal Cys is not an aspartate (The Asp acts as a targeting signal to indicate that the lipoprotein should stay in the inner membrane). In Escherichia coli O139:H28 (strain E24377A / ETEC), this protein is Outer-membrane lipoprotein carrier protein.